The following is a 511-amino-acid chain: Fusicocca-1,10(14)-diene-8beta,16-diol C-9 hydroxylase (511 aa).

A helical transmembrane segment spans residues 7-29 (TVAALAAVFVAGTLLSRLASWIR). N-linked (GlcNAc...) asparagine glycans are attached at residues asparagine 64, asparagine 163, and asparagine 343. Position 450 (cysteine 450) interacts with heme.

Belongs to the cytochrome P450 family. Heme serves as cofactor.

It localises to the membrane. The protein operates within mycotoxin biosynthesis. In terms of biological role, cytochrome P450 monooxygenase; part of the 2 gene clusters that mediate the biosynthesis of fusicoccins, diterpene glucosides that display phytohormone-like activity and function as potent activators of plasma membrane H(+)-ATPases in plants by modifying 14-3-3 proteins and cause the plant disease constriction canker. The first step in the pathway is performed by the fusicoccadiene synthase PaFS that possesses both prenyl transferase and terpene cyclase activity, converting isopentenyl diphosphate and dimethylallyl diphosphate into geranylgeranyl diphosphate (GGDP) and successively converting GGDP into fusicocca-2,10(14)-diene, a precursor for fusicoccin H. The second step is the oxidation at the C-8 position by the cytochrome P450 monooxygenase PaP450-2 to yield fusicocca-2,10(14)-diene-8-beta-ol. The cytochrome P450 monooxygenase PaP450-1 then catalyzes the hydroxylation at the C-16 position to produce fusicocca-2,10(14)-diene-8-beta,16-diol. The dioxygenase fc-dox then catalyzes the 16-oxydation of fusicocca-2,10(14)-diene-8-beta,16-diol to yield an aldehyde (8-beta-hydroxyfusicocca-1,10(14)-dien-16-al). The short-chain dehydrogenase/reductase fc-sdr catalyzes the reduction of the aldehyde to yield fusicocca-1,10(14)-diene-8-beta,16-diol. The next step is the hydroxylation at C-9 performed by the cytochrome P450 monooxygenase PaP450-3 that leads to fusicoccin H aglycon which is glycosylated to fusicoccin H by the O-glycosyltransferase PaGT. Hydroxylation at C-12 by the cytochrome P450 monooxygenase PaP450-4 leads then to the production of fusicoccin Q and is followed by methylation by the O-methyltransferase PaMT to yield fusicoccin P. Fusicoccin P is further converted to fusicoccin J via prenylation by the O-glucose prenyltransferase PaPT. Cytochrome P450 monooxygenase PaP450-5 then performs hydroxylation at C-19 to yield dideacetyl-fusicoccin A which is acetylated to 3'-O-deacetyl-fusicoccin A by the O-acetyltransferase PaAT-2. Finally, a another acetylation by the O-acetyltransferase PaAT-1 yields fusicoccin A. The chain is Fusicocca-1,10(14)-diene-8beta,16-diol C-9 hydroxylase from Phomopsis amygdali (Fusicoccum amygdali).